A 425-amino-acid chain; its full sequence is Enolase (425 aa).

Q164 contacts (2R)-2-phosphoglycerate. E208 acts as the Proton donor in catalysis. Mg(2+) contacts are provided by D243, E286, and D312. (2R)-2-phosphoglycerate is bound by residues K337, R366, S367, and K388. K337 serves as the catalytic Proton acceptor.

The protein belongs to the enolase family. Mg(2+) serves as cofactor.

The protein resides in the cytoplasm. The protein localises to the secreted. It localises to the cell surface. The enzyme catalyses (2R)-2-phosphoglycerate = phosphoenolpyruvate + H2O. Its pathway is carbohydrate degradation; glycolysis; pyruvate from D-glyceraldehyde 3-phosphate: step 4/5. Catalyzes the reversible conversion of 2-phosphoglycerate (2-PG) into phosphoenolpyruvate (PEP). It is essential for the degradation of carbohydrates via glycolysis. The polypeptide is Enolase (Methanococcus aeolicus (strain ATCC BAA-1280 / DSM 17508 / OCM 812 / Nankai-3)).